Consider the following 549-residue polypeptide: Putative acyl-CoA synthetase YngI (549 aa).

ATP contacts are provided by residues 198 to 206 (TSGTTGFPK), aspartate 423, arginine 438, and lysine 529.

Belongs to the ATP-dependent AMP-binding enzyme family.

In Bacillus subtilis (strain 168), this protein is Putative acyl-CoA synthetase YngI (yngI).